The chain runs to 108 residues: Tetrahydromethanopterin S-methyltransferase subunit B (108 aa).

The helical transmembrane segment at 77 to 99 (FQGMFFGFWVTMAVLVLVTILAV) threads the bilayer.

Belongs to the MtrB family. The complex is composed of 8 subunits; MtrA, MtrB, MtrC, MtrD, MtrE, MtrF, MtrG and MtrH.

The protein localises to the cell membrane. It catalyses the reaction 5-methyl-5,6,7,8-tetrahydromethanopterin + coenzyme M + 2 Na(+)(in) = 5,6,7,8-tetrahydromethanopterin + methyl-coenzyme M + 2 Na(+)(out). The protein operates within one-carbon metabolism; methanogenesis from CO(2); methyl-coenzyme M from 5,10-methylene-5,6,7,8-tetrahydromethanopterin: step 2/2. In terms of biological role, part of a complex that catalyzes the formation of methyl-coenzyme M and tetrahydromethanopterin from coenzyme M and methyl-tetrahydromethanopterin. This is an energy-conserving, sodium-ion translocating step. In Methanococcus maripaludis (strain DSM 14266 / JCM 13030 / NBRC 101832 / S2 / LL), this protein is Tetrahydromethanopterin S-methyltransferase subunit B.